The chain runs to 239 residues: DNA repair protein RecO (239 aa).

It belongs to the RecO family.

Functionally, involved in DNA repair and RecF pathway recombination. The protein is DNA repair protein RecO of Aromatoleum aromaticum (strain DSM 19018 / LMG 30748 / EbN1) (Azoarcus sp. (strain EbN1)).